Here is a 215-residue protein sequence, read N- to C-terminus: UPF0056 membrane protein YhcE (215 aa).

6 helical membrane passes run 14-34 (FFIG…FISM), 54-74 (VAII…LFGI), 81-101 (IAGG…KLGE), 120-140 (VVPL…TIVW), 147-167 (ISYL…CWGL), and 189-209 (IMGL…IKGI).

The protein belongs to the UPF0056 (MarC) family.

It localises to the cell membrane. The protein is UPF0056 membrane protein YhcE (ychE) of Escherichia coli (strain K12).